The chain runs to 148 residues: Transcriptional regulator MraZ (148 aa).

SpoVT-AbrB domains are found at residues 5-51 (AAAL…PSPA) and 80-123 (ARTE…SEAG).

The protein belongs to the MraZ family. As to quaternary structure, forms oligomers.

The protein localises to the cytoplasm. The protein resides in the nucleoid. The polypeptide is Transcriptional regulator MraZ (Dechloromonas aromatica (strain RCB)).